The following is a 1061-amino-acid chain: Isoleucine--tRNA ligase (1061 aa).

The 'HIGH' region motif lies at 50 to 60 (PYTSGSAHMGT). Residues 604-608 (KMSKS) carry the 'KMSKS' region motif. Lys-607 serves as a coordination point for ATP.

It belongs to the class-I aminoacyl-tRNA synthetase family. IleS type 2 subfamily. In terms of assembly, monomer. Zn(2+) is required as a cofactor.

The protein localises to the cytoplasm. It catalyses the reaction tRNA(Ile) + L-isoleucine + ATP = L-isoleucyl-tRNA(Ile) + AMP + diphosphate. In terms of biological role, catalyzes the attachment of isoleucine to tRNA(Ile). As IleRS can inadvertently accommodate and process structurally similar amino acids such as valine, to avoid such errors it has two additional distinct tRNA(Ile)-dependent editing activities. One activity is designated as 'pretransfer' editing and involves the hydrolysis of activated Val-AMP. The other activity is designated 'posttransfer' editing and involves deacylation of mischarged Val-tRNA(Ile). In Natronomonas pharaonis (strain ATCC 35678 / DSM 2160 / CIP 103997 / JCM 8858 / NBRC 14720 / NCIMB 2260 / Gabara) (Halobacterium pharaonis), this protein is Isoleucine--tRNA ligase.